The chain runs to 146 residues: MIIKIHNQTSFCIKPFKSLLIKMFLPIKEKKIMHLIFVTNEKIQELNSFYRQKNYPTDVLSFHNDLTFFAGLEDNSLGDVFISFPKAQEQAKTFKHSLEREIAFLAVHGFLHLKGYQHRTEEEFQIMLALQEKILQKVGLNLDKTK.

Positions 108, 112, and 118 each coordinate Zn(2+).

It belongs to the endoribonuclease YbeY family. Zn(2+) is required as a cofactor.

The protein resides in the cytoplasm. Its function is as follows. Single strand-specific metallo-endoribonuclease involved in late-stage 70S ribosome quality control and in maturation of the 3' terminus of the 16S rRNA. The sequence is that of Endoribonuclease YbeY from Aster yellows witches'-broom phytoplasma (strain AYWB).